We begin with the raw amino-acid sequence, 212 residues long: Methylthioribulose-1-phosphate dehydratase (212 aa).

2 residues coordinate Zn(2+): H97 and H99.

The protein belongs to the aldolase class II family. MtnB subfamily. Homotetramer. Zn(2+) serves as cofactor.

It catalyses the reaction 5-(methylsulfanyl)-D-ribulose 1-phosphate = 5-methylsulfanyl-2,3-dioxopentyl phosphate + H2O. It functions in the pathway amino-acid biosynthesis; L-methionine biosynthesis via salvage pathway; L-methionine from S-methyl-5-thio-alpha-D-ribose 1-phosphate: step 2/6. Functionally, catalyzes the dehydration of methylthioribulose-1-phosphate (MTRu-1-P) into 2,3-diketo-5-methylthiopentyl-1-phosphate (DK-MTP-1-P). In Bacillus cereus (strain G9842), this protein is Methylthioribulose-1-phosphate dehydratase.